The chain runs to 140 residues: Nucleoside diphosphate kinase (140 aa).

ATP is bound by residues K11, F59, R87, T93, R104, and N114. H117 acts as the Pros-phosphohistidine intermediate in catalysis.

It belongs to the NDK family. Homotetramer. Mg(2+) serves as cofactor.

It is found in the cytoplasm. It carries out the reaction a 2'-deoxyribonucleoside 5'-diphosphate + ATP = a 2'-deoxyribonucleoside 5'-triphosphate + ADP. The enzyme catalyses a ribonucleoside 5'-diphosphate + ATP = a ribonucleoside 5'-triphosphate + ADP. In terms of biological role, major role in the synthesis of nucleoside triphosphates other than ATP. The ATP gamma phosphate is transferred to the NDP beta phosphate via a ping-pong mechanism, using a phosphorylated active-site intermediate. The sequence is that of Nucleoside diphosphate kinase from Brucella anthropi (strain ATCC 49188 / DSM 6882 / CCUG 24695 / JCM 21032 / LMG 3331 / NBRC 15819 / NCTC 12168 / Alc 37) (Ochrobactrum anthropi).